The chain runs to 187 residues: ATP-dependent protease subunit HslV (187 aa).

T13 is a catalytic residue. Residues A172, C175, and T178 each contribute to the Na(+) site.

Belongs to the peptidase T1B family. HslV subfamily. In terms of assembly, a double ring-shaped homohexamer of HslV is capped on each side by a ring-shaped HslU homohexamer. The assembly of the HslU/HslV complex is dependent on binding of ATP.

Its subcellular location is the cytoplasm. The catalysed reaction is ATP-dependent cleavage of peptide bonds with broad specificity.. Allosterically activated by HslU binding. Functionally, protease subunit of a proteasome-like degradation complex believed to be a general protein degrading machinery. In Caulobacter sp. (strain K31), this protein is ATP-dependent protease subunit HslV.